The sequence spans 212 residues: MQILLAALVAYLIGSVSFAVVVSAAMGLADPRSYGSKNPGATNVLRSGNKKAAILTLVGDAFKGWLAVWLARHFGLPDVAVAWVAIAVFLGHLYPVFFRFQGGKGVATAAGVLLAVHPVLGLATALTWLIVAFFFRYSSLAALVAAVFAPLFDVFLFGTRHNPVAWAVLAMSVLLVWRHRGNISKLLAGQESRIGDKKKAAANGGAQDGGKL.

The next 5 membrane-spanning stretches (helical) occupy residues 3–23, 51–71, 78–98, 115–135, and 139–159; these read ILLAALVAYLIGSVSFAVVVS, KAAILTLVGDAFKGWLAVWLA, DVAVAWVAIAVFLGHLYPVFF, AVHPVLGLATALTWLIVAFFF, and SLAALVAAVFAPLFDVFLFGT.

It belongs to the PlsY family. In terms of assembly, probably interacts with PlsX.

Its subcellular location is the cell inner membrane. The enzyme catalyses an acyl phosphate + sn-glycerol 3-phosphate = a 1-acyl-sn-glycero-3-phosphate + phosphate. Its pathway is lipid metabolism; phospholipid metabolism. Functionally, catalyzes the transfer of an acyl group from acyl-phosphate (acyl-PO(4)) to glycerol-3-phosphate (G3P) to form lysophosphatidic acid (LPA). This enzyme utilizes acyl-phosphate as fatty acyl donor, but not acyl-CoA or acyl-ACP. The protein is Glycerol-3-phosphate acyltransferase of Burkholderia ambifaria (strain MC40-6).